The chain runs to 251 residues: Malonyl-[acyl-carrier protein] O-methyltransferase (251 aa).

Belongs to the methyltransferase superfamily.

It carries out the reaction malonyl-[ACP] + S-adenosyl-L-methionine = malonyl-[ACP] methyl ester + S-adenosyl-L-homocysteine. It participates in cofactor biosynthesis; biotin biosynthesis. Converts the free carboxyl group of a malonyl-thioester to its methyl ester by transfer of a methyl group from S-adenosyl-L-methionine (SAM). It allows to synthesize pimeloyl-ACP via the fatty acid synthetic pathway. The protein is Malonyl-[acyl-carrier protein] O-methyltransferase of Erwinia billingiae (strain Eb661).